A 336-amino-acid polypeptide reads, in one-letter code: Phospho-N-acetylmuramoyl-pentapeptide-transferase (336 aa).

The next 10 helical transmembrane spans lie at Leu3–Ile23, Gly53–Ile73, Ser78–Leu98, Leu118–Ile138, Val143–Val163, Gly174–Ala194, Phe200–Asn220, Val226–Ala246, Trp251–Val271, and Ala316–Phe336.

This sequence belongs to the glycosyltransferase 4 family. MraY subfamily. It depends on Mg(2+) as a cofactor.

It is found in the cell membrane. It carries out the reaction UDP-N-acetyl-alpha-D-muramoyl-L-alanyl-gamma-D-glutamyl-L-lysyl-D-alanyl-D-alanine + di-trans,octa-cis-undecaprenyl phosphate = Mur2Ac(oyl-L-Ala-gamma-D-Glu-L-Lys-D-Ala-D-Ala)-di-trans,octa-cis-undecaprenyl diphosphate + UMP. Its pathway is cell wall biogenesis; peptidoglycan biosynthesis. Its function is as follows. Catalyzes the initial step of the lipid cycle reactions in the biosynthesis of the cell wall peptidoglycan: transfers peptidoglycan precursor phospho-MurNAc-pentapeptide from UDP-MurNAc-pentapeptide onto the lipid carrier undecaprenyl phosphate, yielding undecaprenyl-pyrophosphoryl-MurNAc-pentapeptide, known as lipid I. The polypeptide is Phospho-N-acetylmuramoyl-pentapeptide-transferase (Streptococcus pyogenes serotype M3 (strain ATCC BAA-595 / MGAS315)).